The chain runs to 449 residues: Malonyl-CoA:anthocyanidin 5-O-glucoside-6''-O-malonyltransferase (449 aa).

M1 carries the N-acetylmethionine modification. Catalysis depends on proton acceptor residues H162 and D394.

Belongs to the plant acyltransferase family. As to expression, expressed in flowers. Detected in leaves, stems, roots and siliques.

It carries out the reaction anthocyanin A3 + malonyl-CoA = anthocyanin A5 + CoA. The enzyme catalyses anthocyanin A7 + malonyl-CoA = anthocyanin A9 + CoA. It catalyses the reaction anthocyanin A6 + malonyl-CoA = anthocyanin A8 + CoA. The catalysed reaction is anthocyanin A10 + malonyl-CoA = anthocyanin A11 + CoA. Catalyzes the malonylation of the 5-O-glucose residue of anthocyanins, using malonyl-CoA as the malonyl donor. Acts only on anthocyanin substrates containing a 5-O-glucosyl moiety. Acts on the four native A.thaliana anthocyanins, A3, A7, and to a lesser extent, A6 and A10. Can also use the non-native anthocyanin compounds cyanin (cyanidin 3,5-diglucoside), malvin, pelargonidin 3,5-diglucoside, peonidin 3,5-diglucoside, cyanidin 3-coumaroylglucoside 5-glucoside, delphinidin 3-coumaroylrutinoside 5-glucoside and petunidin 3-coumaroylrutinoside 5-glucoside as substrates. Is the sole enzyme responsible for producing malonylated anthocyanin 5-O-glucosides in A.thaliana. Is not able to catalyze acyl transfer using acetyl-CoA, butyryl-CoA, hexanoyl-CoA, benzoyl-CoA, cinnamoyl-CoA, methylmalonyl-CoA, succinyl-CoA, p-coumaroyl-CoA or caffeoyl-CoA. In Arabidopsis thaliana (Mouse-ear cress), this protein is Malonyl-CoA:anthocyanidin 5-O-glucoside-6''-O-malonyltransferase (5MAT).